A 513-amino-acid chain; its full sequence is Sterol 14-alpha demethylase rstn2 (513 aa).

A helical membrane pass occupies residues 3-23 (WPLIGAYALLAFVAIIALNVT). Cysteine 453 is a heme binding site.

Belongs to the cytochrome P450 family. Heme is required as a cofactor.

Its subcellular location is the membrane. It catalyses the reaction a 14alpha-methyl steroid + 3 reduced [NADPH--hemoprotein reductase] + 3 O2 = a Delta(14) steroid + formate + 3 oxidized [NADPH--hemoprotein reductase] + 4 H2O + 4 H(+). The enzyme catalyses a 14alpha-methyl steroid + reduced [NADPH--hemoprotein reductase] + O2 = a 14alpha-hydroxymethyl steroid + oxidized [NADPH--hemoprotein reductase] + H2O + H(+). The catalysed reaction is a 14alpha-hydroxymethyl steroid + reduced [NADPH--hemoprotein reductase] + O2 = a 14alpha-formyl steroid + oxidized [NADPH--hemoprotein reductase] + 2 H2O + H(+). It carries out the reaction a 14alpha-formyl steroid + reduced [NADPH--hemoprotein reductase] + O2 = a Delta(14) steroid + formate + oxidized [NADPH--hemoprotein reductase] + H2O + 2 H(+). It catalyses the reaction lanosterol + 3 reduced [NADPH--hemoprotein reductase] + 3 O2 = 4,4-dimethyl-5alpha-cholesta-8,14,24-trien-3beta-ol + formate + 3 oxidized [NADPH--hemoprotein reductase] + 4 H2O + 4 H(+). The enzyme catalyses lanosterol + reduced [NADPH--hemoprotein reductase] + O2 = 32-hydroxylanosterol + oxidized [NADPH--hemoprotein reductase] + H2O + H(+). The catalysed reaction is 32-hydroxylanosterol + reduced [NADPH--hemoprotein reductase] + O2 = 32-oxolanosterol + oxidized [NADPH--hemoprotein reductase] + 2 H2O + H(+). It carries out the reaction 32-oxolanosterol + reduced [NADPH--hemoprotein reductase] + O2 = 4,4-dimethyl-5alpha-cholesta-8,14,24-trien-3beta-ol + formate + oxidized [NADPH--hemoprotein reductase] + H2O + 2 H(+). It catalyses the reaction eburicol + 3 reduced [NADPH--hemoprotein reductase] + 3 O2 = 14-demethyleburicol + formate + 3 oxidized [NADPH--hemoprotein reductase] + 4 H2O + 4 H(+). The enzyme catalyses eburicol + reduced [NADPH--hemoprotein reductase] + O2 = 32-hydroxyeburicol + oxidized [NADPH--hemoprotein reductase] + H2O + H(+). The catalysed reaction is 32-hydroxyeburicol + reduced [NADPH--hemoprotein reductase] + O2 = 32-oxoeburicol + oxidized [NADPH--hemoprotein reductase] + 2 H2O + H(+). It carries out the reaction 32-oxoeburicol + reduced [NADPH--hemoprotein reductase] + O2 = 14-demethyleburicol + formate + oxidized [NADPH--hemoprotein reductase] + H2O + 2 H(+). Its pathway is steroid biosynthesis; sterol biosynthesis. Its function is as follows. Sterol 14-alpha demethylase; part of the gene cluster that mediates the biosynthesis of the tetrahydropyranyl antifungal agent restricticin that acts as an inhibitor of CYP51 and blocks the ergosterol biosynthesis. Sterol 14-alpha-demethylase plays a critical role in the biosynthesis of ergosterol, the major sterol component in fungal membranes that participates in a variety of functions. Rtsn2 acts as a self-resistant CYP51 that contains mutations found in CYP51s isolated from azole resistance strains and that is not inhibited by the final product of the cluster, restricticin. The protein is Sterol 14-alpha demethylase rstn2 of Aspergillus nomiae NRRL (strain ATCC 15546 / NRRL 13137 / CBS 260.88 / M93).